The sequence spans 312 residues: Urease accessory protein UreD (312 aa).

Residues 1–15 (MLAEQFTDKNKHAEQ) show a composition bias toward basic and acidic residues. Positions 1–24 (MLAEQFTDKNKHAEQELSPGSSAV) are disordered.

It belongs to the UreD family. UreD, UreF and UreG form a complex that acts as a GTP-hydrolysis-dependent molecular chaperone, activating the urease apoprotein by helping to assemble the nickel containing metallocenter of UreC. The UreE protein probably delivers the nickel.

The protein localises to the cytoplasm. Its function is as follows. Required for maturation of urease via the functional incorporation of the urease nickel metallocenter. This chain is Urease accessory protein UreD, found in Hahella chejuensis (strain KCTC 2396).